A 233-amino-acid polypeptide reads, in one-letter code: ATP-dependent Clp protease proteolytic subunit 2 (233 aa).

The Nucleophile role is filled by Ser-116. His-141 is an active-site residue. The tract at residues 214–233 is disordered; sequence EGLKSIQPNGEAADDSEDDA.

This sequence belongs to the peptidase S14 family. Fourteen ClpP subunits assemble into 2 heptameric rings which stack back to back to give a disk-like structure with a central cavity, resembling the structure of eukaryotic proteasomes.

It is found in the cytoplasm. It catalyses the reaction Hydrolysis of proteins to small peptides in the presence of ATP and magnesium. alpha-casein is the usual test substrate. In the absence of ATP, only oligopeptides shorter than five residues are hydrolyzed (such as succinyl-Leu-Tyr-|-NHMec, and Leu-Tyr-Leu-|-Tyr-Trp, in which cleavage of the -Tyr-|-Leu- and -Tyr-|-Trp bonds also occurs).. Cleaves peptides in various proteins in a process that requires ATP hydrolysis. Has a chymotrypsin-like activity. Plays a major role in the degradation of misfolded proteins. In Salinibacter ruber (strain DSM 13855 / M31), this protein is ATP-dependent Clp protease proteolytic subunit 2.